We begin with the raw amino-acid sequence, 254 residues long: RxLR effector protein CRE5 (254 aa).

Residues 1-19 (MQTIQLIIFVAFVLSRAAA) form the signal peptide. Asn-49 is a glycosylation site (N-linked (GlcNAc...) asparagine). Positions 53 to 63 (RSLRQHEGEDR) match the RxLR-dEER motif. The 64-residue stretch at 191 to 254 (SRWLSAGVVT…MEEGGVCRAL (64 aa)) folds into the Nudix hydrolase domain. A Nudix box motif is present at residues 228-249 (GGWDRGEKIKKAALREVMEEGG).

It in the N-terminal section; belongs to the RxLR effector family. In the C-terminal section; belongs to the Nudix hydrolase family.

It is found in the secreted. It localises to the host cytoplasm. The protein resides in the host nucleus. Its subcellular location is the host nucleolus. Its function is as follows. Effector that is involved in host plant infection. Contributes to virulence during the early infection stage, by inhibiting plant defense responses induced by both PAMP-triggered immunity (PTI) and effector-triggered immunity (ETI). The chain is RxLR effector protein CRE5 from Phytophthora infestans (strain T30-4) (Potato late blight agent).